The sequence spans 304 residues: Nod factor export ATP-binding protein I (304 aa).

Positions Ile6–Tyr236 constitute an ABC transporter domain. Gly38–Thr45 lines the ATP pocket.

Belongs to the ABC transporter superfamily. Lipooligosaccharide exporter (TC 3.A.1.102) family. As to quaternary structure, the complex is composed of two ATP-binding proteins (NodI) and two transmembrane proteins (NodJ).

The protein resides in the cell inner membrane. In terms of biological role, part of the ABC transporter complex NodIJ involved in the export of the nodulation factors (Nod factors), the bacterial signal molecules that induce symbiosis and subsequent nodulation induction. Nod factors are LCO (lipo-chitin oligosaccharide), a modified beta-1,4-linked N-acetylglucosamine oligosaccharide. This subunit is responsible for energy coupling to the transport system. This Burkholderia thailandensis (strain ATCC 700388 / DSM 13276 / CCUG 48851 / CIP 106301 / E264) protein is Nod factor export ATP-binding protein I.